We begin with the raw amino-acid sequence, 571 residues long: Sulfite reductase [NADPH] hemoprotein beta-component (571 aa).

The [4Fe-4S] cluster site is built by Cys436, Cys442, Cys481, and Cys485. Residue Cys485 participates in siroheme binding.

The protein belongs to the nitrite and sulfite reductase 4Fe-4S domain family. In terms of assembly, alpha(8)-beta(8). The alpha component is a flavoprotein, the beta component is a hemoprotein. Siroheme serves as cofactor. Requires [4Fe-4S] cluster as cofactor.

It carries out the reaction hydrogen sulfide + 3 NADP(+) + 3 H2O = sulfite + 3 NADPH + 4 H(+). It participates in sulfur metabolism; hydrogen sulfide biosynthesis; hydrogen sulfide from sulfite (NADPH route): step 1/1. Its function is as follows. Component of the sulfite reductase complex that catalyzes the 6-electron reduction of sulfite to sulfide. This is one of several activities required for the biosynthesis of L-cysteine from sulfate. This is Sulfite reductase [NADPH] hemoprotein beta-component from Anoxybacillus flavithermus (strain DSM 21510 / WK1).